Reading from the N-terminus, the 246-residue chain is TATA-box-binding protein (246 aa).

The segment at 1–27 is disordered; sequence MSSDKTSQQTFKLAPNNSVAQSNSIDQ. A run of 2 repeats spans residues 53–129 and 143–220.

This sequence belongs to the TBP family. Belongs to the TFIID complex together with the TBP-associated factors (TAFs). Binds DNA as monomer.

The protein resides in the nucleus. Functionally, general transcription factor that functions at the core of the DNA-binding multiprotein factor TFIID. Binding of TFIID to the TATA box is the initial transcriptional step of the pre-initiation complex (PIC), playing a role in the activation of eukaryotic genes transcribed by RNA polymerase II. The polypeptide is TATA-box-binding protein (Tetrahymena thermophila).